We begin with the raw amino-acid sequence, 382 residues long: SPRY domain-containing protein C285.10c (382 aa).

Residues 21 to 41 (LAILFIFIALAAVIVLLICLL) traverse the membrane as a helical segment. The 206-residue stretch at 79–284 (GFSLLDDMGK…LHVNLGQAGY (206 aa)) folds into the B30.2/SPRY domain. Residues 304 to 382 (APPPSYSTSQ…MHSMPATDEV (79 aa)) are disordered. Polar residues-rich tracts occupy residues 309 to 334 (YSTS…QGDT) and 361 to 372 (FSPSSSNNQAYQ).

The protein resides in the cytoplasm. Its subcellular location is the membrane. The sequence is that of SPRY domain-containing protein C285.10c from Schizosaccharomyces pombe (strain 972 / ATCC 24843) (Fission yeast).